Consider the following 393-residue polypeptide: tRNA(Met) cytidine acetate ligase (393 aa).

Gly-81, Asn-142, and Arg-167 together coordinate ATP.

The protein belongs to the TmcAL family.

The protein localises to the cytoplasm. It carries out the reaction cytidine(34) in elongator tRNA(Met) + acetate + ATP = N(4)-acetylcytidine(34) in elongator tRNA(Met) + AMP + diphosphate. Catalyzes the formation of N(4)-acetylcytidine (ac(4)C) at the wobble position of elongator tRNA(Met), using acetate and ATP as substrates. First activates an acetate ion to form acetyladenylate (Ac-AMP) and then transfers the acetyl group to tRNA to form ac(4)C34. This Bacillus anthracis (strain A0248) protein is tRNA(Met) cytidine acetate ligase.